Here is a 307-residue protein sequence, read N- to C-terminus: Ribosomal RNA small subunit methyltransferase H (307 aa).

S-adenosyl-L-methionine-binding positions include 32-34 (GGH), Asp52, Phe78, Asp99, and Gln106.

Belongs to the methyltransferase superfamily. RsmH family.

The protein resides in the cytoplasm. It catalyses the reaction cytidine(1402) in 16S rRNA + S-adenosyl-L-methionine = N(4)-methylcytidine(1402) in 16S rRNA + S-adenosyl-L-homocysteine + H(+). In terms of biological role, specifically methylates the N4 position of cytidine in position 1402 (C1402) of 16S rRNA. The chain is Ribosomal RNA small subunit methyltransferase H from Acinetobacter baumannii (strain SDF).